The primary structure comprises 260 residues: 5-oxoprolinase subunit A 2 (260 aa).

It belongs to the LamB/PxpA family. Forms a complex composed of PxpA, PxpB and PxpC.

The catalysed reaction is 5-oxo-L-proline + ATP + 2 H2O = L-glutamate + ADP + phosphate + H(+). Its function is as follows. Catalyzes the cleavage of 5-oxoproline to form L-glutamate coupled to the hydrolysis of ATP to ADP and inorganic phosphate. The polypeptide is 5-oxoprolinase subunit A 2 (Ralstonia nicotianae (strain ATCC BAA-1114 / GMI1000) (Ralstonia solanacearum)).